Here is a 404-residue protein sequence, read N- to C-terminus: Biflaviolin synthase CYP158A2 (404 aa).

Residues R288 and L293 each coordinate flaviolin. C353 serves as a coordination point for heme.

The protein belongs to the cytochrome P450 family. It depends on heme as a cofactor.

It catalyses the reaction 2 flaviolin + 2 reduced [2Fe-2S]-[ferredoxin] + O2 + H(+) = 3,3'-biflaviolin + 2 oxidized [2Fe-2S]-[ferredoxin] + 2 H2O. The catalysed reaction is 2 flaviolin + 2 reduced [2Fe-2S]-[ferredoxin] + O2 + H(+) = 3,8'-biflaviolin + 2 oxidized [2Fe-2S]-[ferredoxin] + 2 H2O. Its pathway is pigment biosynthesis. In terms of biological role, catalyzes oxidative C-C coupling reaction to polymerize flaviolin and form highly conjugated pigments which protect the soil bacterium from deleterious effects of UV irradiation (three isomers of biflaviolin and one triflaviolin). The chain is Biflaviolin synthase CYP158A2 from Streptomyces coelicolor (strain ATCC BAA-471 / A3(2) / M145).